The sequence spans 437 residues: Probable receptor-like serine/threonine-protein kinase At4g34500 (437 aa).

Residues Leu-25–Val-45 traverse the membrane as a helical segment. A Protein kinase domain is found at Phe-145 to Arg-426. ATP contacts are provided by residues Ile-151–Val-159 and Lys-173. The residue at position 220 (Tyr-220) is a Phosphotyrosine. The active-site Proton acceptor is Asp-273. Ser-277 carries the post-translational modification Phosphoserine. Phosphothreonine is present on residues Thr-307 and Thr-312. Tyr-320 is modified (phosphotyrosine).

This sequence belongs to the protein kinase superfamily. Ser/Thr protein kinase family.

The protein localises to the cell membrane. The enzyme catalyses L-seryl-[protein] + ATP = O-phospho-L-seryl-[protein] + ADP + H(+). It carries out the reaction L-threonyl-[protein] + ATP = O-phospho-L-threonyl-[protein] + ADP + H(+). This Arabidopsis thaliana (Mouse-ear cress) protein is Probable receptor-like serine/threonine-protein kinase At4g34500.